The chain runs to 373 residues: tRNA 2-selenouridine synthase (373 aa).

Residues 12 to 136 (FINDRPMMDA…MRGFLLETTE (125 aa)) enclose the Rhodanese domain. The active-site S-selanylcysteine intermediate is C95.

The protein belongs to the SelU family. In terms of assembly, monomer.

It carries out the reaction 5-methylaminomethyl-2-thiouridine(34) in tRNA + selenophosphate + (2E)-geranyl diphosphate + H2O + H(+) = 5-methylaminomethyl-2-selenouridine(34) in tRNA + (2E)-thiogeraniol + phosphate + diphosphate. The catalysed reaction is 5-methylaminomethyl-2-thiouridine(34) in tRNA + (2E)-geranyl diphosphate = 5-methylaminomethyl-S-(2E)-geranyl-thiouridine(34) in tRNA + diphosphate. The enzyme catalyses 5-methylaminomethyl-S-(2E)-geranyl-thiouridine(34) in tRNA + selenophosphate + H(+) = 5-methylaminomethyl-2-(Se-phospho)selenouridine(34) in tRNA + (2E)-thiogeraniol. It catalyses the reaction 5-methylaminomethyl-2-(Se-phospho)selenouridine(34) in tRNA + H2O = 5-methylaminomethyl-2-selenouridine(34) in tRNA + phosphate. Involved in the post-transcriptional modification of the uridine at the wobble position (U34) of tRNA(Lys), tRNA(Glu) and tRNA(Gln). Catalyzes the conversion of 2-thiouridine (S2U-RNA) to 2-selenouridine (Se2U-RNA). Acts in a two-step process involving geranylation of 2-thiouridine (S2U) to S-geranyl-2-thiouridine (geS2U) and subsequent selenation of the latter derivative to 2-selenouridine (Se2U) in the tRNA chain. The chain is tRNA 2-selenouridine synthase from Ectopseudomonas mendocina (strain ymp) (Pseudomonas mendocina).